A 638-amino-acid polypeptide reads, in one-letter code: Growth hormone receptor (638 aa).

A signal peptide spans 1–18; the sequence is MDLWQLLLTLALAGSSDA. Over 19-264 the chain is Extracellular; sequence FSGSEPTAAI…NQFTCEEDFY (246 aa). The N-linked (GlcNAc...) asparagine glycan is linked to Asn-46. Cystine bridges form between Cys-56-Cys-66 and Cys-101-Cys-112. Asn-115 carries an N-linked (GlcNAc...) asparagine glycan. A disulfide bridge connects residues Cys-126 and Cys-140. The region spanning 151–254 is the Fibronectin type-III domain; it reads PPIALNWTLL…EVLYVTLPQM (104 aa). 3 N-linked (GlcNAc...) asparagine glycosylation sites follow: Asn-156, Asn-161, and Asn-200. Positions 240–244 match the WSXWS motif motif; sequence YGEFS. Residues 265-288 form a helical membrane-spanning segment; it reads FPWLLIIIFGIFGLTVMLFVFLFS. At 289-638 the chain is on the cytoplasmic side; it reads KQQRIKMLIL…STDQLNKIMP (350 aa). Residues 294 to 379 are required for JAK2 binding; sequence KMLILPPVPV…HQKSHSNLGV (86 aa). Residues 297–305 carry the Box 1 motif motif; the sequence is ILPPVPVPK. Positions 340 to 349 match the UbE motif motif; it reads DSWVEFIELD. Ser-341 is subject to Phosphoserine. The disordered stretch occupies residues 353-388; the sequence is PDEKNEGSDTDRLLSSDHQKSHSNLGVKDGDSGRTS. Basic and acidic residues predominate over residues 356–372; sequence KNEGSDTDRLLSSDHQK. Phosphotyrosine occurs at positions 487 and 595.

The protein belongs to the type I cytokine receptor family. Type 1 subfamily. In terms of assembly, on growth hormone (GH) binding, forms homodimers and binds JAK2 via a box 1-containing domain. Post-translationally, the soluble form (GHBP) is produced by phorbol ester-promoted proteolytic cleavage at the cell surface (shedding) by ADAM17/TACE. Shedding is inhibited by growth hormone (GH) binding to the receptor probably due to a conformational change in GHR rendering the receptor inaccessible to ADAM17. In terms of processing, on GH binding, phosphorylated on tyrosine residues in the cytoplasmic domain by JAK2. Ubiquitinated by the ECS(SOCS2) complex following ligand-binding and phosphorylation by JAK2, leading to its degradation by the proteasome. Regulation by the ECS(SOCS2) complex acts as a negative feedback loop of growth hormone receptor signaling. Ubiquitination is not sufficient for GHR internalization.

Its subcellular location is the cell membrane. The protein localises to the secreted. In terms of biological role, receptor for pituitary gland growth hormone (GH1) involved in regulating postnatal body growth. On ligand binding, couples to the JAK2/STAT5 pathway. Its function is as follows. The soluble form (GHBP) acts as a reservoir of growth hormone in plasma and may be a modulator/inhibitor of GH signaling. The protein is Growth hormone receptor (GHR) of Macaca mulatta (Rhesus macaque).